The following is a 721-amino-acid chain: Catalase-peroxidase 1 (721 aa).

The segment at residues 98–223 (WHAAGSYRVA…LAAVQMGLIY (126 aa)) is a cross-link (tryptophyl-tyrosyl-methioninium (Trp-Tyr) (with M-249)). H99 functions as the Proton acceptor in the catalytic mechanism. A cross-link (tryptophyl-tyrosyl-methioninium (Tyr-Met) (with W-98)) is located at residues 223–249 (YVNPEGVNGQPDPLRTAQDVRVTFGRM). Residue H264 participates in heme b binding.

Belongs to the peroxidase family. Peroxidase/catalase subfamily. As to quaternary structure, homodimer or homotetramer. The cofactor is heme b. In terms of processing, formation of the three residue Trp-Tyr-Met cross-link is important for the catalase, but not the peroxidase activity of the enzyme.

The catalysed reaction is H2O2 + AH2 = A + 2 H2O. It catalyses the reaction 2 H2O2 = O2 + 2 H2O. In terms of biological role, bifunctional enzyme with both catalase and broad-spectrum peroxidase activity. The chain is Catalase-peroxidase 1 from Legionella pneumophila (strain Paris).